Consider the following 615-residue polypeptide: Dihydroxy-acid dehydratase (615 aa).

Mg(2+) is bound at residue Asp-81. A [2Fe-2S] cluster-binding site is contributed by Cys-122. 2 residues coordinate Mg(2+): Asp-123 and Lys-124. Lys-124 carries the post-translational modification N6-carboxylysine. Residue Cys-195 participates in [2Fe-2S] cluster binding. Residue Glu-491 participates in Mg(2+) binding. Ser-517 serves as the catalytic Proton acceptor.

This sequence belongs to the IlvD/Edd family. In terms of assembly, homodimer. [2Fe-2S] cluster serves as cofactor. It depends on Mg(2+) as a cofactor.

The catalysed reaction is (2R)-2,3-dihydroxy-3-methylbutanoate = 3-methyl-2-oxobutanoate + H2O. It carries out the reaction (2R,3R)-2,3-dihydroxy-3-methylpentanoate = (S)-3-methyl-2-oxopentanoate + H2O. The protein operates within amino-acid biosynthesis; L-isoleucine biosynthesis; L-isoleucine from 2-oxobutanoate: step 3/4. It functions in the pathway amino-acid biosynthesis; L-valine biosynthesis; L-valine from pyruvate: step 3/4. In terms of biological role, functions in the biosynthesis of branched-chain amino acids. Catalyzes the dehydration of (2R,3R)-2,3-dihydroxy-3-methylpentanoate (2,3-dihydroxy-3-methylvalerate) into 2-oxo-3-methylpentanoate (2-oxo-3-methylvalerate) and of (2R)-2,3-dihydroxy-3-methylbutanoate (2,3-dihydroxyisovalerate) into 2-oxo-3-methylbutanoate (2-oxoisovalerate), the penultimate precursor to L-isoleucine and L-valine, respectively. The polypeptide is Dihydroxy-acid dehydratase (Shewanella halifaxensis (strain HAW-EB4)).